Reading from the N-terminus, the 188-residue chain is Ribosomal RNA small subunit methyltransferase G (188 aa).

S-adenosyl-L-methionine is bound by residues Gly-69, Phe-74, 119–120 (VQ), and Arg-134.

This sequence belongs to the methyltransferase superfamily. RNA methyltransferase RsmG family.

Its subcellular location is the cytoplasm. It catalyses the reaction guanosine(527) in 16S rRNA + S-adenosyl-L-methionine = N(7)-methylguanosine(527) in 16S rRNA + S-adenosyl-L-homocysteine. Specifically methylates the N7 position of guanine in position 527 of 16S rRNA. The chain is Ribosomal RNA small subunit methyltransferase G from Campylobacter jejuni subsp. jejuni serotype O:23/36 (strain 81-176).